Reading from the N-terminus, the 297-residue chain is tRNA uridine(34) hydroxylase (297 aa).

Residues 133-228 (SGDEVVFFDG…YGETFKDQGL (96 aa)) enclose the Rhodanese domain. Cys-188 acts as the Cysteine persulfide intermediate in catalysis.

Belongs to the TrhO family.

The catalysed reaction is uridine(34) in tRNA + AH2 + O2 = 5-hydroxyuridine(34) in tRNA + A + H2O. Its function is as follows. Catalyzes oxygen-dependent 5-hydroxyuridine (ho5U) modification at position 34 in tRNAs. In Pseudarthrobacter chlorophenolicus (strain ATCC 700700 / DSM 12829 / CIP 107037 / JCM 12360 / KCTC 9906 / NCIMB 13794 / A6) (Arthrobacter chlorophenolicus), this protein is tRNA uridine(34) hydroxylase.